The sequence spans 377 residues: Unsaturated 3S-rhamnoglycuronyl hydrolase (377 aa).

The N-terminal stretch at 1–25 (MKNQALKILTLCVLVGSAMSLKLYA) is a signal peptide. Aspartate 161 serves as the catalytic Proton donor.

This sequence belongs to the glycosyl hydrolase 105 family.

The protein resides in the periplasm. Functionally, unsaturated beta-glucuronyl hydrolase involved in ulvan degradation. Ulvan is the main polysaccharide component of the Ulvales (green seaweed) cell wall. It is composed of disaccharide building blocks comprising 3-sulfated rhamnose (Rha3S) linked to D-glucuronic acid (GlcA), L-iduronic acid (IduA), or D-xylose (Xyl). Unsaturated 3S-rhamnoglycuronyl hydrolase works together with ulvan lyases to fully degrade the ulvan polymer, catalyzing specifically the cleavage of the unsaturated 4-deoxy-L-threo-hex-4-enopyranosiduronic acid (deltaUA) of deltaUA-Rha3S disaccharides and deltaUA-Rha3S-Xyl-Rha3S tetrasaccharides, the end products of the ulvan lyase reaction. Also hydrolases deltaUA-Rha3S-IduA-Rha3S and deltaUA-Rha3S-GlcA-Rha3S tetrasaccharidestetrasaccharides. Prefers tetrasaccharides over disaccharides and prefers an uronic residue at subsite +2. The sequence is that of Unsaturated 3S-rhamnoglycuronyl hydrolase from Formosa agariphila (strain DSM 15362 / KCTC 12365 / LMG 23005 / KMM 3901 / M-2Alg 35-1).